A 132-amino-acid chain; its full sequence is Hydrogenase maturation factor HypA (132 aa).

Position 2 (H2) interacts with Ni(2+). C74, C77, C91, and C94 together coordinate Zn(2+).

The protein belongs to the HypA/HybF family.

In terms of biological role, involved in the maturation of [NiFe] hydrogenases. Required for nickel insertion into the metal center of the hydrogenase. In Synechococcus sp. (strain JA-2-3B'a(2-13)) (Cyanobacteria bacterium Yellowstone B-Prime), this protein is Hydrogenase maturation factor HypA.